Reading from the N-terminus, the 514-residue chain is Cytochrome bd-II ubiquinol oxidase subunit 1 (514 aa).

The Cytoplasmic portion of the chain corresponds to 1–22 (MWDVIDLSRWQFALTALYHFLF). Heme is bound at residue His19. Residues 23–42 (VPLTLGLIFLLAIMETIYVV) form a helical membrane-spanning segment. The Periplasmic segment spans residues 43 to 94 (TGKTIYRDMTRFWGKLFGINFALGVATGLTMEFQFGTNWSFYSNYVGDIFGA). The helical transmembrane segment at 95–114 (PLAMEALMAFFLESTFVGLF) threads the bilayer. At 115–129 (FFGWQRLNKYQHLLV) the chain is on the cytoplasmic side. The helical transmembrane segment at 130-149 (TWLVAFGSNLSALWILNANG) threads the bilayer. Topologically, residues 150 to 187 (WMQYPTGAHFDIDTLRMEMTSFSELVFNPVSQVKFVHT) are periplasmic. His186 lines the heme pocket. Residues 188–207 (VMAGYVTGAMFIMAISAWYL) traverse the membrane as a helical segment. Residues 208–219 (LRGRERNVALRS) lie on the Cytoplasmic side of the membrane. Residues 220 to 239 (FAIGSVFGTLAIIGTLQLGD) traverse the membrane as a helical segment. Residues 240–392 (SSAYEVAQVQ…VAPVFWSFRI (153 aa)) lie on the Periplasmic side of the membrane. Met393 is a binding site for heme. Residues 393 to 412 (MVGCGSLLLLVMLIALVQTL) form a helical membrane-spanning segment. At 413 to 470 (RGKIDQHRWVLKMALWSLPLPWIAIEAGWFMTEFGRQPWAIQDILPTYSAHSALTTGQ) the chain is on the cytoplasmic side. The helical transmembrane segment at 471 to 490 (LAFSLIMIVGLYTLFLIAEV) threads the bilayer. At 491–514 (YLMQKYARLGPSAMQSEQPTQQQG) the chain is on the periplasmic side.

This sequence belongs to the cytochrome ubiquinol oxidase subunit 1 family. Heterodimer of subunits I and II. It depends on heme as a cofactor. The N-terminus is blocked.

The protein resides in the cell inner membrane. It carries out the reaction 2 a ubiquinol + O2 + n H(+)(in) = 2 a ubiquinone + 2 H2O + n H(+)(out). It participates in energy metabolism; oxidative phosphorylation. Its activity is regulated as follows. Inhibited by cyanide; is more sensitive to cyanide than cytochrome bd-I oxidase. Its function is as follows. A terminal oxidase that catalyzes quinol-dependent, Na(+)-independent oxygen uptake. Prefers menadiol over other quinols although ubiquinol was not tested. Generates a proton motive force using protons and electrons from opposite sides of the membrane to generate H(2)O, transferring 1 proton/electron. The sequence is that of Cytochrome bd-II ubiquinol oxidase subunit 1 (appC) from Escherichia coli (strain K12).